A 192-amino-acid chain; its full sequence is Phosphomevalonate kinase (192 aa).

ATP is bound by residues 17–23 (KRKSGKD) and Arg141. Asn170 lines the substrate pocket. Positions 171 and 180 each coordinate ATP.

Monomer.

It localises to the cytoplasm. Its subcellular location is the cytosol. The catalysed reaction is (R)-5-phosphomevalonate + ATP = (R)-5-diphosphomevalonate + ADP. Its pathway is isoprenoid biosynthesis; isopentenyl diphosphate biosynthesis via mevalonate pathway; isopentenyl diphosphate from (R)-mevalonate: step 2/3. Catalyzes the reversible ATP-dependent phosphorylation of mevalonate 5-phosphate to produce mevalonate diphosphate and ADP, a key step in the mevalonic acid mediated biosynthesis of isopentenyl diphosphate and other polyisoprenoid metabolites. The chain is Phosphomevalonate kinase (Pmvk) from Mus musculus (Mouse).